The chain runs to 68 residues: MDPETCPCPSGGSCTCADSCKCEGCKCTSCKKSCCSCCPAECEKCAKDCVCKGGEAAEAEAEKCSCCQ.

Residue Met-1 is modified to N-acetylmethionine. Residues 1–30 (MDPETCPCPSGGSCTCADSCKCEGCKCTSC) form a beta region. A divalent metal cation-binding residues include Cys-6, Cys-8, Cys-14, Cys-16, Cys-20, Cys-22, Cys-25, Cys-27, and Cys-30. An alpha region spans residues 31–68 (KKSCCSCCPAECEKCAKDCVCKGGEAAEAEAEKCSCCQ). Ser-33 bears the Phosphoserine mark. A divalent metal cation contacts are provided by Cys-34, Cys-35, Cys-37, Cys-38, Cys-42, Cys-45, Cys-49, Cys-51, Cys-64, Cys-66, and Cys-67.

The protein belongs to the metallothionein superfamily. Type 1 family. Abundant in a subset of astrocytes in the normal human brain, but greatly reduced in the Alzheimer disease (AD) brain.

Functionally, binds heavy metals. Contains three zinc and three copper atoms per polypeptide chain and only a negligible amount of cadmium. Inhibits survival and neurite formation of cortical neurons in vitro. The protein is Metallothionein-3 (MT3) of Homo sapiens (Human).